A 205-amino-acid polypeptide reads, in one-letter code: Small ribosomal subunit protein uS4 (205 aa).

Residues 1 to 16 (MSKRESSKYKIDRRMG) show a composition bias toward basic and acidic residues. The interval 1 to 46 (MSKRESSKYKIDRRMGENIWGRPKSPVNRREYGPGQHGQRRKSKLS) is disordered. The region spanning 94-157 (SRLDAIVYRA…KQLVSVLESV (64 aa)) is the S4 RNA-binding domain.

Belongs to the universal ribosomal protein uS4 family. In terms of assembly, part of the 30S ribosomal subunit. Contacts protein S5. The interaction surface between S4 and S5 is involved in control of translational fidelity.

In terms of biological role, one of the primary rRNA binding proteins, it binds directly to 16S rRNA where it nucleates assembly of the body of the 30S subunit. Functionally, with S5 and S12 plays an important role in translational accuracy. The polypeptide is Small ribosomal subunit protein uS4 (Sinorhizobium fredii (strain NBRC 101917 / NGR234)).